A 363-amino-acid polypeptide reads, in one-letter code: DNA polymerase IV (363 aa).

The region spanning 14-197 is the UmuC domain; that stretch reads IIHIDMDAFF…LPVEKFHGVG (184 aa). The Mg(2+) site is built by D18 and D115. E116 is a catalytic residue.

Belongs to the DNA polymerase type-Y family. As to quaternary structure, monomer. The cofactor is Mg(2+).

It localises to the cytoplasm. The enzyme catalyses DNA(n) + a 2'-deoxyribonucleoside 5'-triphosphate = DNA(n+1) + diphosphate. Poorly processive, error-prone DNA polymerase involved in untargeted mutagenesis. Copies undamaged DNA at stalled replication forks, which arise in vivo from mismatched or misaligned primer ends. These misaligned primers can be extended by PolIV. Exhibits no 3'-5' exonuclease (proofreading) activity. May be involved in translesional synthesis, in conjunction with the beta clamp from PolIII. The polypeptide is DNA polymerase IV (Lactococcus lactis subsp. lactis (strain IL1403) (Streptococcus lactis)).